The sequence spans 128 residues: MDSSNPSSLPLEKSSGNVQKGKLLNIWSRCIAQPSSFLGSSISRFWANADIKNRVCSAAIGRVNFVSKCLKKFPEVSLSCNISASLSLNTGKEKVKNEDLEKQERCHKVAMIEYEIQNLERQLKKRQF.

This is an uncharacterized protein from Caenorhabditis elegans.